Reading from the N-terminus, the 117-residue chain is MDMRVPAQLLGLLLLWVPGARCDIQLTQSPSSLSASVGDRVTITCRVSQGISSYLNWYRQKPGKVPKLLIYSASNLQSGVPSRFSGSGSGTDFTLTISSLQPEDVATYYGQRTYNAP.

Positions 1-22 (MDMRVPAQLLGLLLLWVPGARC) are cleaved as a signal peptide. Residues 24–117 (IQLTQSPSSL…YYGQRTYNAP (94 aa)) enclose the Ig-like domain.

As to quaternary structure, most probably, the immunoglobulin is not assembled due to incorrect folding of light chain. Immunoglobulins are composed of two identical heavy chains and two identical light chains; disulfide-linked.

It localises to the secreted. The protein resides in the cell membrane. Probable non-functional open reading frame (ORF) of V region of the variable domain of immunoglobulin light chains. Non-functional ORF generally cannot participate in the synthesis of a productive immunoglobulin chain due to altered V-(D)-J or switch recombination and/or splicing site (at mRNA level) and/or conserved amino acid change (protein level). Immunoglobulins, also known as antibodies, are membrane-bound or secreted glycoproteins produced by B lymphocytes. In the recognition phase of humoral immunity, the membrane-bound immunoglobulins serve as receptors which, upon binding of a specific antigen, trigger the clonal expansion and differentiation of B lymphocytes into immunoglobulins-secreting plasma cells. Secreted immunoglobulins mediate the effector phase of humoral immunity, which results in the elimination of bound antigens. The antigen binding site is formed by the variable domain of one heavy chain, together with that of its associated light chain. Thus, each immunoglobulin has two antigen binding sites with remarkable affinity for a particular antigen. The variable domains are assembled by a process called V-(D)-J rearrangement and can then be subjected to somatic hypermutations which, after exposure to antigen and selection, allow affinity maturation for a particular antigen. The protein is Probable non-functional immunoglobulinn kappa variable 1-37 of Homo sapiens (Human).